The following is an 835-amino-acid chain: Leucine--tRNA ligase (835 aa).

Residues 42 to 52 (PYPSGRIHMGH) carry the 'HIGH' region motif. The 'KMSKS' region signature appears at 612–616 (KMSKS). Position 615 (lysine 615) interacts with ATP.

The protein belongs to the class-I aminoacyl-tRNA synthetase family.

The protein resides in the cytoplasm. The catalysed reaction is tRNA(Leu) + L-leucine + ATP = L-leucyl-tRNA(Leu) + AMP + diphosphate. The sequence is that of Leucine--tRNA ligase from Rhizorhabdus wittichii (strain DSM 6014 / CCUG 31198 / JCM 15750 / NBRC 105917 / EY 4224 / RW1) (Sphingomonas wittichii).